A 502-amino-acid chain; its full sequence is Cytochrome P450 71A1 (502 aa).

A helical membrane pass occupies residues 7–21 (LLFLAIALTFFLLKL). Heme is bound at residue cysteine 443.

It belongs to the cytochrome P450 family. Heme is required as a cofactor. Mesocarp.

The protein resides in the microsome membrane. It is found in the endoplasmic reticulum membrane. Involved in the metabolism of compounds associated with the development of flavor in the ripening fruit process, possibly by acting as trans-cinnamic acid 4-hydrolase. This Persea americana (Avocado) protein is Cytochrome P450 71A1 (CYP71A1).